Reading from the N-terminus, the 881-residue chain is DNA replication helicase (881 aa).

Positions 1–32 (MESADILPGSRGTVDRRCEGSEEKITPPRPVE) are disordered. The segment covering 13-32 (TVDRRCEGSEEKITPPRPVE) has biased composition (basic and acidic residues). 105–112 (GNAGSGKS) is an ATP binding site.

This sequence belongs to the herpesviridae helicase family. In terms of assembly, associates with the primase and the primase-associated factor to form the helicase-primase complex.

The protein localises to the host nucleus. Its function is as follows. Component of the helicase/primase complex. Unwinds the DNA at the replication forks and generates single-stranded DNA for both leading and lagging strand synthesis. The primase synthesizes short RNA primers on the lagging strand that the polymerase elongates using dNTPs. Possesses helicase-like motifs and therefore may act as the helicase subunit of the complex. In Equus caballus (Horse), this protein is DNA replication helicase.